Consider the following 31-residue polypeptide: MGINTRELFLNFTIVLITVILMWLLVRSYQY.

Over Met1 to Glu7 the chain is Cytoplasmic. Residues Leu8 to Val26 traverse the membrane as a helical segment. Over Arg27–Tyr31 the chain is Lumenal.

This sequence belongs to the sarcolipin family. Homooligomer. Can also form heterooligomers with other sarcoplasmic/endoplasmic reticulum calcium ATPase (SERCA) regulators ARLN, ERLN, PLN and STRIT1/DWORF. Monomer. Interacts with calcium ATPase ATP2A1/SERCA1. Interacts as a monomer with ATP2A2/SERCA2; the interaction decreases ATP2A2 Ca(2+) affinity. Interacts with VMP1; VMP1 competes with PLN and SLN to prevent them from forming an inhibitory complex with ATP2A2.

It is found in the sarcoplasmic reticulum membrane. It localises to the endoplasmic reticulum membrane. Reversibly inhibits the activity of ATP2A1/SERCA1 and ATP2A2/SERCA2 in sarcoplasmic reticulum by decreasing the apparent affinity of the ATPase for Ca(2+). Also inhibits the activity of ATP2A3/SERCA3. Modulates calcium re-uptake during muscle relaxation and plays an important role in calcium homeostasis in muscle. Required for muscle-based, non-shivering thermogenesis. This Homo sapiens (Human) protein is Sarcolipin.